The following is a 304-amino-acid chain: Glycine--tRNA ligase alpha subunit (304 aa).

It belongs to the class-II aminoacyl-tRNA synthetase family. As to quaternary structure, tetramer of two alpha and two beta subunits.

Its subcellular location is the cytoplasm. The enzyme catalyses tRNA(Gly) + glycine + ATP = glycyl-tRNA(Gly) + AMP + diphosphate. The polypeptide is Glycine--tRNA ligase alpha subunit (Tolumonas auensis (strain DSM 9187 / NBRC 110442 / TA 4)).